The following is a 228-amino-acid chain: Response regulator MprA (228 aa).

A Response regulatory domain is found at 2–116 (RILAVDDDRA…ELLARIRALL (115 aa)). The residue at position 46 (D46) is a 4-aspartylphosphate. Residues 127–225 (SVAMSFSDLT…VRGVGYVLRE (99 aa)) constitute a DNA-binding region (ompR/PhoB-type).

Post-translationally, phosphorylated and dephosphorylated by MprB.

It localises to the cytoplasm. Its function is as follows. Member of the two-component regulatory system MprB/MprA which contributes to maintaining a balance among several systems involved in stress resistance and is required for establishment and maintenance of persistent infection in the host. Functions as a transcriptional regulator that recognizes a 19-bp nucleotide motif comprizing two loosely conserved 8-bp direct DNA-binding motif repeats separated by a 3-bp spacer region. The chain is Response regulator MprA (mprA) from Mycobacterium leprae (strain TN).